A 394-amino-acid chain; its full sequence is Alpha-2B adrenergic receptor (394 aa).

Residues 1-25 (AIAAVITFLILFTIFGNALVILAVL) traverse the membrane as a helical segment. Residues 26-36 (TSRSLRAPQNL) are Cytoplasmic-facing. The chain crosses the membrane as a helical span at residues 37 to 62 (FLVSLAAADILVATLIIPFSLANELL). The Extracellular portion of the chain corresponds to 63 to 72 (GYWYFRRTWC). A disulfide bridge links Cys72 with Cys151. The chain crosses the membrane as a helical span at residues 73–95 (EVYLALDVLFCTSSIVHLCAISL). Residues 96–117 (DRYWAVSRALEYNCKRTPRRIK) lie on the Cytoplasmic side of the membrane. Residues 118–140 (CIILTVWLIAAAISLPPLIYKGD) traverse the membrane as a helical segment. Residues 141-156 (QGPQPHGAPQCKLNQE) lie on the Extracellular side of the membrane. A helical transmembrane segment spans residues 157 to 180 (AWYILSSSLGSFFVPCLIMILVYL). Over 181-358 (RIYLIAKRSH…LSREKRFTFV (178 aa)) the chain is Cytoplasmic. The tract at residues 191–318 (RRGPRAKGGP…GSPPLQQPQG (128 aa)) is disordered. A compositionally biased stretch (acidic residues) spans 281-298 (LEEEAEEEEEEEEEEDEP). Over residues 299–312 (QAVPVSPASVGSPP) the composition is skewed to low complexity. The chain crosses the membrane as a helical span at residues 359-382 (LAVVIGVFVLCWFPFFFSYSLSAI). The Extracellular portion of the chain corresponds to 383-391 (CPQQCRVPH). Residues 392-394 (GLF) form a helical membrane-spanning segment.

Belongs to the G-protein coupled receptor 1 family. Adrenergic receptor subfamily. ADRA2B sub-subfamily. Interacts with RAB26. Interacts with PPP1R9B. Interacts with GGA1, GGA2 and GGA3.

It is found in the cell membrane. Its function is as follows. Alpha-2 adrenergic receptors mediate the catecholamine-induced inhibition of adenylate cyclase through the action of G proteins. The sequence is that of Alpha-2B adrenergic receptor (ADRA2B) from Oryctolagus cuniculus (Rabbit).